Consider the following 122-residue polypeptide: Ribonuclease P protein subunit p14 (122 aa).

This sequence belongs to the eukaryotic/archaeal RNase P protein component 2 family. RNase P consists of a catalytic RNA moiety and about 10 protein subunits; POP1, POP4, POP5, POP7, RPP14, RPP21, RPP25, RPP30, RPP38 and RPP40. Within the RNase P complex, POP1, POP7 and RPP25 form the 'finger' subcomplex, POP5, RPP14, RPP40 and homodimeric RPP30 form the 'palm' subcomplex, and RPP21, POP4 and RPP38 form the 'wrist' subcomplex. All subunits of the RNase P complex interact with the catalytic RNA.

The protein localises to the nucleus. Its subcellular location is the nucleolus. Component of ribonuclease P, a ribonucleoprotein complex that generates mature tRNA molecules by cleaving their 5'-ends. This is Ribonuclease P protein subunit p14 (Rpp14) from Mus musculus (Mouse).